We begin with the raw amino-acid sequence, 512 residues long: Cytochrome P450 1A2 (512 aa).

The O-linked (GlcNAc) serine glycan is linked to Ser65. Residue Phe222 participates in substrate binding. Residue Cys454 coordinates heme.

The protein belongs to the cytochrome P450 family. In terms of assembly, interacts with PGRMC1; the interaction requires PGRMC1 homodimerization. Requires heme as cofactor.

It is found in the endoplasmic reticulum membrane. The protein resides in the microsome membrane. It catalyses the reaction an organic molecule + reduced [NADPH--hemoprotein reductase] + O2 = an alcohol + oxidized [NADPH--hemoprotein reductase] + H2O + H(+). It carries out the reaction 17beta-estradiol + reduced [NADPH--hemoprotein reductase] + O2 = 2-hydroxy-17beta-estradiol + oxidized [NADPH--hemoprotein reductase] + H2O + H(+). The catalysed reaction is 17beta-estradiol + reduced [NADPH--hemoprotein reductase] + O2 = 4-hydroxy-17beta-estradiol + oxidized [NADPH--hemoprotein reductase] + H2O + H(+). The enzyme catalyses estrone + reduced [NADPH--hemoprotein reductase] + O2 = 2-hydroxyestrone + oxidized [NADPH--hemoprotein reductase] + H2O + H(+). It catalyses the reaction estrone + reduced [NADPH--hemoprotein reductase] + O2 = 4-hydroxyestrone + oxidized [NADPH--hemoprotein reductase] + H2O + H(+). It carries out the reaction cholesterol + reduced [NADPH--hemoprotein reductase] + O2 = 25-hydroxycholesterol + oxidized [NADPH--hemoprotein reductase] + H2O + H(+). The catalysed reaction is all-trans-retinol + reduced [NADPH--hemoprotein reductase] + O2 = all-trans-retinal + oxidized [NADPH--hemoprotein reductase] + 2 H2O + H(+). The enzyme catalyses all-trans-retinal + reduced [NADPH--hemoprotein reductase] + O2 = all-trans-retinoate + oxidized [NADPH--hemoprotein reductase] + H2O + 2 H(+). It catalyses the reaction (5Z,8Z,11Z,14Z)-eicosatetraenoate + reduced [NADPH--hemoprotein reductase] + O2 = (14R,15S)-epoxy-(5Z,8Z,11Z)-eicosatrienoate + oxidized [NADPH--hemoprotein reductase] + H2O + H(+). It carries out the reaction (5Z,8Z,11Z,14Z)-eicosatetraenoate + reduced [NADPH--hemoprotein reductase] + O2 = (14S,15R)-epoxy-(5Z,8Z,11Z)-eicosatrienoate + oxidized [NADPH--hemoprotein reductase] + H2O + H(+). The catalysed reaction is (5Z,8Z,11Z,14Z,17Z)-eicosapentaenoate + reduced [NADPH--hemoprotein reductase] + O2 = (17R,18S)-epoxy-(5Z,8Z,11Z,14Z)-eicosatetraenoate + oxidized [NADPH--hemoprotein reductase] + H2O + H(+). The enzyme catalyses (4Z,7Z,10Z,13Z,16Z,19Z)-docosahexaenoate + reduced [NADPH--hemoprotein reductase] + O2 = (19R,20S)-epoxy-(4Z,7Z,10Z,13Z,16Z)-docosapentaenoate + oxidized [NADPH--hemoprotein reductase] + H2O + H(+). It catalyses the reaction (5S)-hydroperoxy-(6E,8Z,11Z,14Z)-eicosatetraenoate = 5-oxo-(6E,8Z,11Z,14Z)-eicosatetraenoate + H2O. It carries out the reaction (12S)-hydroperoxy-(5Z,8Z,10E,14Z)-eicosatetraenoate = 12-oxo-(5Z,8Z,10E,14Z)-eicosatetraenoate + H2O. The catalysed reaction is (15S)-hydroperoxy-(5Z,8Z,11Z,13E)-eicosatetraenoate = 15-oxo-(5Z,8Z,11Z,13E)-eicosatetraenoate + H2O. The enzyme catalyses (13S)-hydroperoxy-(9Z,11E)-octadecadienoate = 13-oxo-(9Z,11E)-octadecadienoate + H2O. It catalyses the reaction (5Z,8Z,11Z,14Z)-eicosatetraenoate + reduced [NADPH--hemoprotein reductase] + O2 = 13-hydroxy-(5Z,8Z,11Z,14Z)-eicosatetraenoate + oxidized [NADPH--hemoprotein reductase] + H2O + H(+). It carries out the reaction (5Z,8Z,11Z,14Z)-eicosatetraenoate + reduced [NADPH--hemoprotein reductase] + O2 = 19-hydroxy-(5Z,8Z,11Z,14Z)-eicosatetraenoate + oxidized [NADPH--hemoprotein reductase] + H2O + H(+). The catalysed reaction is (9Z,12Z)-octadecadienoate + reduced [NADPH--hemoprotein reductase] + O2 = 11-hydroxy-(9Z,12Z)-octadecadienoate + oxidized [NADPH--hemoprotein reductase] + H2O + H(+). The protein operates within cofactor metabolism; retinol metabolism. It participates in steroid metabolism; cholesterol metabolism. Its pathway is lipid metabolism; arachidonate metabolism. Its function is as follows. A cytochrome P450 monooxygenase involved in the metabolism of various endogenous substrates, including fatty acids, steroid hormones and vitamins. Mechanistically, uses molecular oxygen inserting one oxygen atom into a substrate, and reducing the second into a water molecule, with two electrons provided by NADPH via cytochrome P450 reductase (NADPH--hemoprotein reductase). Catalyzes the hydroxylation of carbon-hydrogen bonds. Exhibits high catalytic activity for the formation of hydroxyestrogens from estrone (E1) and 17beta-estradiol (E2), namely 2-hydroxy E1 and E2. Metabolizes cholesterol toward 25-hydroxycholesterol, a physiological regulator of cellular cholesterol homeostasis. May act as a major enzyme for all-trans retinoic acid biosynthesis in the liver. Catalyzes two successive oxidative transformation of all-trans retinol to all-trans retinal and then to the active form all-trans retinoic acid. Primarily catalyzes stereoselective epoxidation of the last double bond of polyunsaturated fatty acids (PUFA), displaying a strong preference for the (R,S) stereoisomer. Catalyzes bisallylic hydroxylation and omega-1 hydroxylation of PUFA. May also participate in eicosanoids metabolism by converting hydroperoxide species into oxo metabolites (lipoxygenase-like reaction, NADPH-independent). Plays a role in the oxidative metabolism of xenobiotics. Catalyzes the N-hydroxylation of heterocyclic amines and the O-deethylation of phenacetin. Metabolizes caffeine via N3-demethylation. The protein is Cytochrome P450 1A2 (CYP1A2) of Felis catus (Cat).